We begin with the raw amino-acid sequence, 923 residues long: Hexokinase-3 (923 aa).

The segment covering 1-18 (MDSIGSSGLRQGEETLSC) has biased composition (polar residues). Residues 1 to 30 (MDSIGSSGLRQGEETLSCSEEGLPGPSDSS) are disordered. 2 consecutive Hexokinase domains span residues 27-471 (SDSS…MVTA) and 477-912 (AAHR…LVTA). The hexokinase small subdomain 1 stretch occupies residues 84–220 (HGTEQGDFVV…AYNIDVVAVV (137 aa)). 95–102 (ELGATGAS) serves as a coordination point for ATP. Residue 95 to 104 (ELGATGASLR) participates in D-glucose 6-phosphate binding. Residues Ser168, 185-186 (TK), and 221-222 (ND) each bind D-glucose. A hexokinase large subdomain 1 region spans residues 221-460 (NDTVGTMMGC…CDVSLIPSVD (240 aa)). Asp222 and Thr245 together coordinate D-glucose 6-phosphate. Residues Asn248, Glu273, and 304–307 (QRFE) contribute to the D-glucose site. 426 to 428 (GGR) is a D-glucose 6-phosphate binding site. ATP is bound by residues 438-439 (SV) and 542-547 (DLGGTN). The interval 531–661 (DGSERGDFLA…AVELNVVAIV (131 aa)) is hexokinase small subdomain 2. Residue 542-546 (DLGGT) coordinates D-glucose 6-phosphate. D-glucose is bound by residues 609-610 (SF), 626-627 (TK), and 662-663 (ND). Residues 662–901 (NDTVGTMMSC…CVVTFLQSED (240 aa)) are hexokinase large subdomain 2. 2 residues coordinate D-glucose 6-phosphate: Asp663 and Thr686. Thr686 serves as a coordination point for ATP. D-glucose is bound by residues 688-689 (TN), Glu714, and Glu748. ATP is bound by residues 753-754 (GM), 790-794 (TKFLS), and 869-873 (TLYKL). Residues 867-869 (DGT) and Ser903 each bind D-glucose 6-phosphate.

The protein belongs to the hexokinase family.

It carries out the reaction a D-hexose + ATP = a D-hexose 6-phosphate + ADP + H(+). The catalysed reaction is D-fructose + ATP = D-fructose 6-phosphate + ADP + H(+). The enzyme catalyses D-glucose + ATP = D-glucose 6-phosphate + ADP + H(+). It functions in the pathway carbohydrate metabolism; hexose metabolism. It participates in carbohydrate degradation; glycolysis; D-glyceraldehyde 3-phosphate and glycerone phosphate from D-glucose: step 1/4. With respect to regulation, hexokinase is an allosteric enzyme inhibited by its product D-glucose 6-phosphate. In terms of biological role, catalyzes the phosphorylation of hexose, such as D-glucose and D-fructose, to hexose 6-phosphate (D-glucose 6-phosphate and D-fructose 6-phosphate, respectively). Mediates the initial step of glycolysis by catalyzing phosphorylation of D-glucose to D-glucose 6-phosphate. This chain is Hexokinase-3, found in Homo sapiens (Human).